Here is a 199-residue protein sequence, read N- to C-terminus: Peptidyl-tRNA hydrolase (199 aa).

A tRNA-binding site is contributed by Tyr18. Residue His23 is the Proton acceptor of the active site. 3 residues coordinate tRNA: Tyr72, Asn74, and Asn120.

It belongs to the PTH family. In terms of assembly, monomer.

The protein resides in the cytoplasm. It carries out the reaction an N-acyl-L-alpha-aminoacyl-tRNA + H2O = an N-acyl-L-amino acid + a tRNA + H(+). Functionally, hydrolyzes ribosome-free peptidyl-tRNAs (with 1 or more amino acids incorporated), which drop off the ribosome during protein synthesis, or as a result of ribosome stalling. In terms of biological role, catalyzes the release of premature peptidyl moieties from peptidyl-tRNA molecules trapped in stalled 50S ribosomal subunits, and thus maintains levels of free tRNAs and 50S ribosomes. The polypeptide is Peptidyl-tRNA hydrolase (Bifidobacterium adolescentis (strain ATCC 15703 / DSM 20083 / NCTC 11814 / E194a)).